The chain runs to 466 residues: Glucose-6-phosphate 1-dehydrogenase 1 (466 aa).

NADP(+) is bound by residues serine 48, 88-89 (DV), and lysine 141. Substrate contacts are provided by histidine 171, lysine 175, glutamate 209, and aspartate 228. The active-site Proton acceptor is histidine 233. Residues lysine 319 and lysine 324 each contribute to the substrate site.

The protein belongs to the glucose-6-phosphate dehydrogenase family.

The catalysed reaction is D-glucose 6-phosphate + NADP(+) = 6-phospho-D-glucono-1,5-lactone + NADPH + H(+). Its pathway is carbohydrate degradation; pentose phosphate pathway; D-ribulose 5-phosphate from D-glucose 6-phosphate (oxidative stage): step 1/3. Its function is as follows. Catalyzes the oxidation of glucose 6-phosphate to 6-phosphogluconolactone. In Mycobacterium tuberculosis (strain CDC 1551 / Oshkosh), this protein is Glucose-6-phosphate 1-dehydrogenase 1.